The primary structure comprises 312 residues: Light-independent protochlorophyllide reductase iron-sulfur ATP-binding protein (312 aa).

Residues Gly-55 to Thr-60 and Lys-84 contribute to the ATP site. Residue Ser-59 coordinates Mg(2+). [4Fe-4S] cluster-binding residues include Cys-140 and Cys-174. ATP is bound by residues Asn-225–Arg-226 and Pro-249–Leu-251.

The protein belongs to the NifH/BchL/ChlL family. In terms of assembly, homodimer. Protochlorophyllide reductase is composed of three subunits; BchL, BchN and BchB. [4Fe-4S] cluster serves as cofactor.

It carries out the reaction chlorophyllide a + oxidized 2[4Fe-4S]-[ferredoxin] + 2 ADP + 2 phosphate = protochlorophyllide a + reduced 2[4Fe-4S]-[ferredoxin] + 2 ATP + 2 H2O. Its pathway is porphyrin-containing compound metabolism; bacteriochlorophyll biosynthesis (light-independent). Its function is as follows. Component of the dark-operative protochlorophyllide reductase (DPOR) that uses Mg-ATP and reduced ferredoxin to reduce ring D of protochlorophyllide (Pchlide) to form chlorophyllide a (Chlide). This reaction is light-independent. The L component serves as a unique electron donor to the NB-component of the complex, and binds Mg-ATP. The polypeptide is Light-independent protochlorophyllide reductase iron-sulfur ATP-binding protein (Rhodopseudomonas palustris (strain HaA2)).